Here is a 117-residue protein sequence, read N- to C-terminus: Ribonuclease P protein component (117 aa).

This sequence belongs to the RnpA family. As to quaternary structure, consists of a catalytic RNA component (M1 or rnpB) and a protein subunit.

The catalysed reaction is Endonucleolytic cleavage of RNA, removing 5'-extranucleotides from tRNA precursor.. In terms of biological role, RNaseP catalyzes the removal of the 5'-leader sequence from pre-tRNA to produce the mature 5'-terminus. It can also cleave other RNA substrates such as 4.5S RNA. The protein component plays an auxiliary but essential role in vivo by binding to the 5'-leader sequence and broadening the substrate specificity of the ribozyme. This Aliivibrio salmonicida (strain LFI1238) (Vibrio salmonicida (strain LFI1238)) protein is Ribonuclease P protein component.